Here is a 532-residue protein sequence, read N- to C-terminus: Mitogen-activated protein kinase kinase mkk1 (532 aa).

The 271-residue stretch at 235–505 folds into the Protein kinase domain; that stretch reads IVELGGLGEG…PWKMLEHPWM (271 aa). Residues 241–249 and K264 contribute to the ATP site; that span reads LGEGAGGAV. Catalysis depends on D362, which acts as the Proton acceptor.

It belongs to the protein kinase superfamily. STE Ser/Thr protein kinase family. MAP kinase kinase subfamily.

It carries out the reaction L-seryl-[protein] + ATP = O-phospho-L-seryl-[protein] + ADP + H(+). The catalysed reaction is L-threonyl-[protein] + ATP = O-phospho-L-threonyl-[protein] + ADP + H(+). In terms of biological role, mitogen-activated protein kinase kinase, part of the mkh1-mkk1-spm1 MAPK cascade that regulates regulates vegetative growth, conidial formation, colony surface hydrophobicity, osmotic stress, cell wall integrity maintenance, carbon and nitrogen source utilization, chitin distribution, septa formation, and pathogenicity. This chain is Mitogen-activated protein kinase kinase mkk1, found in Cytospora mali (Apple Valsa canker fungus).